Consider the following 438-residue polypeptide: tRNA modification GTPase MnmE (438 aa).

The (6S)-5-formyl-5,6,7,8-tetrahydrofolate site is built by Arg20, Glu79, and Lys119. The TrmE-type G domain occupies 215 to 360 (GVEVAIVGPP…LEAALAARVG (146 aa)). Residues 225–230 (NAGKSS), 244–250 (SDEAGTT), and 269–272 (DTAG) contribute to the GTP site. Residues Ser229 and Thr250 each contribute to the Mg(2+) site. Residue Lys438 participates in (6S)-5-formyl-5,6,7,8-tetrahydrofolate binding.

This sequence belongs to the TRAFAC class TrmE-Era-EngA-EngB-Septin-like GTPase superfamily. TrmE GTPase family. Homodimer. Heterotetramer of two MnmE and two MnmG subunits. K(+) is required as a cofactor.

It localises to the cytoplasm. Functionally, exhibits a very high intrinsic GTPase hydrolysis rate. Involved in the addition of a carboxymethylaminomethyl (cmnm) group at the wobble position (U34) of certain tRNAs, forming tRNA-cmnm(5)s(2)U34. The protein is tRNA modification GTPase MnmE of Parvibaculum lavamentivorans (strain DS-1 / DSM 13023 / NCIMB 13966).